The following is a 476-amino-acid chain: Calcium/calmodulin-dependent protein kinase type 1G (476 aa).

Residues 23-277 (FIFMEVLGSG…CEKALRHPWI (255 aa)) enclose the Protein kinase domain. ATP contacts are provided by residues 29 to 37 (LGSGAFSEV) and lysine 52. Residue aspartate 143 is the Proton acceptor of the active site. The interval 277–317 (IDGNTALHRDIYPSVSLQIQKNFAKSKWRQAFNAAAVVHHM) is autoinhibitory domain. The tract at residues 297–318 (KNFAKSKWRQAFNAAAVVHHMR) is calmodulin-binding. The interval 326 to 387 (SPSVRQEVEN…SSRPSAPGGR (62 aa)) is disordered.

The protein belongs to the protein kinase superfamily. CAMK Ser/Thr protein kinase family. CaMK subfamily. Prenylated on Cys-473.

It is found in the cytoplasm. The protein localises to the golgi apparatus membrane. The protein resides in the cell membrane. It catalyses the reaction L-seryl-[protein] + ATP = O-phospho-L-seryl-[protein] + ADP + H(+). The enzyme catalyses L-threonyl-[protein] + ATP = O-phospho-L-threonyl-[protein] + ADP + H(+). With respect to regulation, activated by Ca(2+)/calmodulin. Binding of calmodulin is thought to result in a conformational change and leads to activation through phosphorylation by CAMKK1. Its function is as follows. Calcium/calmodulin-dependent protein kinase belonging to a proposed calcium-triggered signaling cascade. In vitro phosphorylates transcription factor CREB1. This Rattus norvegicus (Rat) protein is Calcium/calmodulin-dependent protein kinase type 1G (Camk1g).